Consider the following 125-residue polypeptide: uncharacterized protein (125 aa).

2 disordered regions span residues M1–S27 and N76–K125. The segment covering G18–S27 has biased composition (low complexity).

This is an uncharacterized protein from Dictyostelium discoideum (Social amoeba).